Consider the following 72-residue polypeptide: MSGRGFLLLALLLLVTVEATRVEKKHSGILLAWSGPRNRFVRIGRRDMQSPLLSERLRFRALGFRQPSSQKQ.

A signal peptide spans 1 to 19 (MSGRGFLLLALLLLVTVEA). The propeptide occupies 20–25 (TRVEKK). The positively charged region crucial for activity against MRGPRX1 receptors stretch occupies residues 32-39 (AWSGPRNR). Ile-43 carries the post-translational modification Isoleucine amide. Residues 44–72 (GRRDMQSPLLSERLRFRALGFRQPSSQKQ) constitute a propeptide that is removed on maturation.

The protein belongs to the FARP (FMRFamide related peptide) family. Expressed by the venom duct.

The protein resides in the secreted. Its function is as follows. This peptide activates human sensory neuron-specific G-protein coupled receptors MRGPRX1, but not mouse receptors (EC(50)=0.54 uM). Compared with the agonist chloroquine (anti-malaria drug), it is 600-fold more potent. In vivo, induces itch sensation, since intradermal cheek injection into humanized transgenic mouse (mouse MRGPRX1 replaced by human MRGPRX1) induces scratching. In vivo, treatment of zebrafish larvae with high doses (10 uM) induces hypoactivity at the beginning of the experiment during the dark phase and hyperactivity in the strobe phase after one hour, even after the removal of the toxin from the solution. In Conus textile (Cloth-of-gold cone), this protein is Conorfamide-Tx2.